The sequence spans 214 residues: Holliday junction branch migration complex subunit RuvA (214 aa).

The interval 1 to 63 (MISFLRGPVA…EDSMTLYGFA (63 aa)) is domain I. The domain II stretch occupies residues 64–139 (DPDEREVFEI…KLVPHGTVNG (76 aa)). The flexible linker stretch occupies residues 139 to 143 (GAPAS). The interval 144-214 (PSAQWKPQVV…SAGRQVTARG (71 aa)) is domain III.

Belongs to the RuvA family. In terms of assembly, homotetramer. Forms an RuvA(8)-RuvB(12)-Holliday junction (HJ) complex. HJ DNA is sandwiched between 2 RuvA tetramers; dsDNA enters through RuvA and exits via RuvB. An RuvB hexamer assembles on each DNA strand where it exits the tetramer. Each RuvB hexamer is contacted by two RuvA subunits (via domain III) on 2 adjacent RuvB subunits; this complex drives branch migration. In the full resolvosome a probable DNA-RuvA(4)-RuvB(12)-RuvC(2) complex forms which resolves the HJ.

Its subcellular location is the cytoplasm. Functionally, the RuvA-RuvB-RuvC complex processes Holliday junction (HJ) DNA during genetic recombination and DNA repair, while the RuvA-RuvB complex plays an important role in the rescue of blocked DNA replication forks via replication fork reversal (RFR). RuvA specifically binds to HJ cruciform DNA, conferring on it an open structure. The RuvB hexamer acts as an ATP-dependent pump, pulling dsDNA into and through the RuvAB complex. HJ branch migration allows RuvC to scan DNA until it finds its consensus sequence, where it cleaves and resolves the cruciform DNA. This Renibacterium salmoninarum (strain ATCC 33209 / DSM 20767 / JCM 11484 / NBRC 15589 / NCIMB 2235) protein is Holliday junction branch migration complex subunit RuvA.